Here is a 138-residue protein sequence, read N- to C-terminus: Acidic phospholipase A2 VP7 (138 aa).

A signal peptide spans 1 to 16; the sequence is MRTLWIVAVCLMGVEG. Cystine bridges form between Cys-42-Cys-131, Cys-44-Cys-60, Cys-59-Cys-111, Cys-65-Cys-138, Cys-66-Cys-104, Cys-73-Cys-97, and Cys-91-Cys-102. Positions 43, 45, and 47 each coordinate Ca(2+). His-63 is a catalytic residue. Residue Asp-64 coordinates Ca(2+). Asp-105 is a catalytic residue.

This sequence belongs to the phospholipase A2 family. Group II subfamily. D49 sub-subfamily. Does not form a complex. Ca(2+) serves as cofactor. Expressed by the venom gland.

Its subcellular location is the secreted. It carries out the reaction a 1,2-diacyl-sn-glycero-3-phosphocholine + H2O = a 1-acyl-sn-glycero-3-phosphocholine + a fatty acid + H(+). Functionally, snake venom phospholipase A2 (PLA2) that is not toxic by itself, but the synergistical mixture of a basic and this acidic protein is lethal. PLA2 catalyzes the calcium-dependent hydrolysis of the 2-acyl groups in 3-sn-phosphoglycerides. This Daboia palaestinae (Palestine viper) protein is Acidic phospholipase A2 VP7.